A 360-amino-acid chain; its full sequence is Photosystem II protein D1 (360 aa).

A run of 3 helical transmembrane segments spans residues 29 to 46 (YIGW…TATS), 118 to 133 (HFLL…EWEL), and 142 to 156 (WIFV…AASA). Histidine 118 provides a ligand contact to chlorophyll a. Tyrosine 126 lines the pheophytin a pocket. The [CaMn4O5] cluster site is built by aspartate 170 and glutamate 189. Residues 197-218 (FHMAGVAGVFGGSLFSAMHGSL) form a helical membrane-spanning segment. Chlorophyll a is bound at residue histidine 198. Residues histidine 215 and 264 to 265 (SF) each bind a quinone. Residue histidine 215 coordinates Fe cation. Histidine 272 provides a ligand contact to Fe cation. Residues 274-288 (FLALWPVLGIWLTAM) form a helical membrane-spanning segment. Residues histidine 332, glutamate 333, aspartate 342, and alanine 344 each contribute to the [CaMn4O5] cluster site. Positions 345–360 (SGDVLPVAFTAPAVNA) are excised as a propeptide.

The protein belongs to the reaction center PufL/M/PsbA/D family. PSII is composed of 1 copy each of membrane proteins PsbA, PsbB, PsbC, PsbD, PsbE, PsbF, PsbH, PsbI, PsbJ, PsbK, PsbL, PsbM, PsbT, PsbX, PsbY, PsbZ, Psb30/Ycf12, at least 3 peripheral proteins of the oxygen-evolving complex and a large number of cofactors. It forms dimeric complexes. The D1/D2 heterodimer binds P680, chlorophylls that are the primary electron donor of PSII, and subsequent electron acceptors. It shares a non-heme iron and each subunit binds pheophytin, quinone, additional chlorophylls, carotenoids and lipids. D1 provides most of the ligands for the Mn4-Ca-O5 cluster of the oxygen-evolving complex (OEC). There is also a Cl(-1) ion associated with D1 and D2, which is required for oxygen evolution. The PSII complex binds additional chlorophylls, carotenoids and specific lipids. is required as a cofactor. Tyr-161 forms a radical intermediate that is referred to as redox-active TyrZ, YZ or Y-Z. In terms of processing, C-terminally processed by CTPA; processing is essential to allow assembly of the oxygen-evolving complex and thus photosynthetic growth.

It is found in the plastid. Its subcellular location is the chloroplast thylakoid membrane. It catalyses the reaction 2 a plastoquinone + 4 hnu + 2 H2O = 2 a plastoquinol + O2. Photosystem II (PSII) is a light-driven water:plastoquinone oxidoreductase that uses light energy to abstract electrons from H(2)O, generating O(2) and a proton gradient subsequently used for ATP formation. It consists of a core antenna complex that captures photons, and an electron transfer chain that converts photonic excitation into a charge separation. The D1/D2 (PsbA/PsbD) reaction center heterodimer binds P680, the primary electron donor of PSII as well as several subsequent electron acceptors. This is Photosystem II protein D1 from Thalassiosira pseudonana (Marine diatom).